We begin with the raw amino-acid sequence, 281 residues long: Putative dehydrogenase/reductase SDR family member 4-like 1 (281 aa).

36–60 (LVTASTDWIGFAVAQRLAQDGAHVV) provides a ligand contact to NADP(+). Ser-172 contributes to the substrate binding site. Catalysis depends on Tyr-185, which acts as the Proton acceptor. Position 189 (Lys-189) interacts with NADP(+). The Peroxisomal targeting signal signature appears at 279-281 (SRL).

Belongs to the short-chain dehydrogenases/reductases (SDR) family.

Functionally, putative oxidoreductase. The polypeptide is Putative dehydrogenase/reductase SDR family member 4-like 1 (Homo sapiens (Human)).